Here is a 184-residue protein sequence, read N- to C-terminus: TATA-box-binding protein (184 aa).

2 tandem repeats follow at residues 9–85 and 100–178.

This sequence belongs to the TBP family.

General factor that plays a role in the activation of archaeal genes transcribed by RNA polymerase. Binds specifically to the TATA box promoter element which lies close to the position of transcription initiation. The polypeptide is TATA-box-binding protein (Thermoplasma volcanium (strain ATCC 51530 / DSM 4299 / JCM 9571 / NBRC 15438 / GSS1)).